The primary structure comprises 743 residues: MTISNTRPITPELIASHGLKPDEYERILSLIRREPTFTELGIFSAMWNEHCSYKSSKKWLRTLPTKGPRVIQGPGENAGVVDIDDGDCVVFKMESHNHPSYIEPYQGAATGVGGILRDVFTMGARPIAAMNALRFGAPDHPKTRHLVSGVVAGVGGYGNSFGVPTVGGEVEFDARYNGNILVNAFAAGLARSDAIFYSKAEGVGLPVVYLGAKTGRDGVGGATMASAEFDESIEEKRPTVQVGDPFTEKCLLEACLELMQTGAVIAIQDMGAAGLTCSAVEMGAKGDLGIELDLDKVPVREERMTAYEMMLSESQERMLMVLRPEKEEEAKAIFVKWGLDFAIVGKTTDDLRFRILHQGEEVANLPIKELGDEAPEYDRPWTPAKSPSPLATNDIPRADVAEALLKLVGSANNSSRRWVYEQYDTLIQGNSLQLPGGDAGVVRVEGHATKALAFSSDVTPRYVEADPFEGGKQAVAECWRNLTATGALPLAATDNLNFGNPERPEIMSQFVHAIKGIGEACRALDFPIVSGNVSLYNETNGQGILPTPTIGGVGLISDWARMARIRFAAADEAILLAGAPEGWGTHIAQSVYMRDVHGRTDGPAPHVDLAHERKVGDFVRGLIADGLVTAVHDCSSGGLALAVAEMAMASGIGATIEAPAGHDPIAAFYGEDQGRYVVTVTAEKLEAIASRARDAGLSLPVIGTTGGSAVKLGDAKAVSVEELRSTHEAWFPTYMGGDLAPDN.

His-50 is an active-site residue. 2 residues coordinate ATP: Tyr-53 and Lys-92. Mg(2+) is bound at residue Glu-94. Residues 95–98 (SHNH) and Arg-117 each bind substrate. The Proton acceptor role is filled by His-96. A Mg(2+)-binding site is contributed by Asp-118. Gln-241 lines the substrate pocket. Asp-269 provides a ligand contact to Mg(2+). 313-315 (ESQ) is a substrate binding site. Residues Asp-494 and Gly-531 each coordinate ATP. Mg(2+) is bound at residue Asn-532. Ser-534 provides a ligand contact to substrate.

Belongs to the FGAMS family. Monomer. Part of the FGAM synthase complex composed of 1 PurL, 1 PurQ and 2 PurS subunits.

The protein localises to the cytoplasm. It carries out the reaction N(2)-formyl-N(1)-(5-phospho-beta-D-ribosyl)glycinamide + L-glutamine + ATP + H2O = 2-formamido-N(1)-(5-O-phospho-beta-D-ribosyl)acetamidine + L-glutamate + ADP + phosphate + H(+). The protein operates within purine metabolism; IMP biosynthesis via de novo pathway; 5-amino-1-(5-phospho-D-ribosyl)imidazole from N(2)-formyl-N(1)-(5-phospho-D-ribosyl)glycinamide: step 1/2. Part of the phosphoribosylformylglycinamidine synthase complex involved in the purines biosynthetic pathway. Catalyzes the ATP-dependent conversion of formylglycinamide ribonucleotide (FGAR) and glutamine to yield formylglycinamidine ribonucleotide (FGAM) and glutamate. The FGAM synthase complex is composed of three subunits. PurQ produces an ammonia molecule by converting glutamine to glutamate. PurL transfers the ammonia molecule to FGAR to form FGAM in an ATP-dependent manner. PurS interacts with PurQ and PurL and is thought to assist in the transfer of the ammonia molecule from PurQ to PurL. The sequence is that of Phosphoribosylformylglycinamidine synthase subunit PurL from Sinorhizobium fredii (strain HH103).